The primary structure comprises 529 residues: Isoleucine--tRNA ligase (529 aa).

Glu-482 contributes to the L-isoleucyl-5'-AMP binding site. A 'KMSKS' region motif is present at residues 523–527 (KMSKS). Lys-526 serves as a coordination point for ATP.

The protein belongs to the class-I aminoacyl-tRNA synthetase family. IleS type 1 subfamily. Monomer.

The protein localises to the cytoplasm. It catalyses the reaction tRNA(Ile) + L-isoleucine + ATP = L-isoleucyl-tRNA(Ile) + AMP + diphosphate. Its function is as follows. Catalyzes the attachment of isoleucine to tRNA(Ile). As IleRS can inadvertently accommodate and process structurally similar amino acids such as valine, to avoid such errors it has two additional distinct tRNA(Ile)-dependent editing activities. One activity is designated as 'pretransfer' editing and involves the hydrolysis of activated Val-AMP. The other activity is designated 'posttransfer' editing and involves deacylation of mischarged Val-tRNA(Ile). This is Isoleucine--tRNA ligase (ileS) from Aquifex pyrophilus.